The primary structure comprises 220 residues: Glutathione S-transferase U23 (220 aa).

The GST N-terminal domain maps to Glu-3–Asn-82. Glutathione-binding positions include Ser-13–Met-14, Asn-39–Lys-40, Lys-53–Ile-54, and Glu-66–Ser-67. The 121-residue stretch at Asp-88 to Ser-208 folds into the GST C-terminal domain.

This sequence belongs to the GST superfamily. Tau family.

The protein resides in the cytoplasm. It localises to the cytosol. The catalysed reaction is RX + glutathione = an S-substituted glutathione + a halide anion + H(+). Its function is as follows. May be involved in the conjugation of reduced glutathione to a wide number of exogenous and endogenous hydrophobic electrophiles and have a detoxification role against certain herbicides. The polypeptide is Glutathione S-transferase U23 (GSTU23) (Arabidopsis thaliana (Mouse-ear cress)).